A 340-amino-acid polypeptide reads, in one-letter code: Nod factor export ATP-binding protein I (340 aa).

Basic and acidic residues predominate over residues 1 to 24 (MLKRKLGPEDLRRLETPAIERESH). The disordered stretch occupies residues 1-34 (MLKRKLGPEDLRRLETPAIERESHGQTSAKSSVP). Residues 25-34 (GQTSAKSSVP) show a composition bias toward polar residues. The 231-residue stretch at 42–272 (VDFAGVTKSY…HIGCQVMEIY (231 aa)) folds into the ABC transporter domain. ATP is bound at residue 74–81 (GPNGAGKS).

Belongs to the ABC transporter superfamily. Lipooligosaccharide exporter (TC 3.A.1.102) family. As to quaternary structure, the complex is composed of two ATP-binding proteins (NodI) and two transmembrane proteins (NodJ).

It is found in the cell inner membrane. Functionally, part of the ABC transporter complex NodIJ involved in the export of the nodulation factors (Nod factors), the bacterial signal molecules that induce symbiosis and subsequent nodulation induction. Nod factors are LCO (lipo-chitin oligosaccharide), a modified beta-1,4-linked N-acetylglucosamine oligosaccharide. This subunit is responsible for energy coupling to the transport system. The polypeptide is Nod factor export ATP-binding protein I (Mesorhizobium japonicum (strain LMG 29417 / CECT 9101 / MAFF 303099) (Mesorhizobium loti (strain MAFF 303099))).